We begin with the raw amino-acid sequence, 245 residues long: 5-oxoprolinase subunit A (245 aa).

Belongs to the LamB/PxpA family. In terms of assembly, forms a complex composed of PxpA, PxpB and PxpC.

The enzyme catalyses 5-oxo-L-proline + ATP + 2 H2O = L-glutamate + ADP + phosphate + H(+). Catalyzes the cleavage of 5-oxoproline to form L-glutamate coupled to the hydrolysis of ATP to ADP and inorganic phosphate. This Erwinia tasmaniensis (strain DSM 17950 / CFBP 7177 / CIP 109463 / NCPPB 4357 / Et1/99) protein is 5-oxoprolinase subunit A.